We begin with the raw amino-acid sequence, 47 residues long: MSSFDYLKSAIKQKGCTLDEVAEPSGMTKGYLSQLLNRKIKARARRS.

Positions leucine 7 to serine 47 constitute an HTH cro/C1-type domain. The segment at residues leucine 18–asparagine 37 is a DNA-binding region (H-T-H motif).

The protein localises to the cell membrane. It localises to the cytoplasm. The catalysed reaction is beta-nicotinamide D-ribonucleotide + ATP + H(+) = diphosphate + NAD(+). It catalyses the reaction beta-nicotinamide D-riboside + ATP = beta-nicotinamide D-ribonucleotide + ADP + H(+). It functions in the pathway cofactor biosynthesis; NAD(+) biosynthesis [regulation]. Its pathway is cofactor biosynthesis; NAD(+) biosynthesis; NAD(+) from nicotinamide D-ribonucleotide: step 1/1. This enzyme has three activities: DNA binding, nicotinamide mononucleotide (NMN) adenylyltransferase and ribosylnicotinamide (RN) kinase. The DNA-binding domain binds to the nadB operator sequence in an NAD- and ATP-dependent manner. As NAD levels increase within the cell, the affinity of NadR for the nadB operator regions of nadA, nadB, and pncB increases, repressing the transcription of these genes. The RN kinase activity catalyzes the phosphorylation of RN to form nicotinamide ribonucleotide. The NMN adenylyltransferase activity catalyzes the transfer of the AMP moiety of ATP to nicotinamide ribonucleotide to form NAD(+). The NMN adenylyltransferase domain also functions as the NAD and ATP sensor. This chain is Trifunctional NAD biosynthesis/regulator protein NadR (nadR), found in Klebsiella pneumoniae.